We begin with the raw amino-acid sequence, 88 residues long: Fe-S protein maturation auxiliary factor SufT (88 aa).

This sequence belongs to the MIP18 family.

In terms of biological role, involved in the maturation of iron-sulfur (Fe-S) proteins. May function as a Fe-S cluster carrier. Is required for S.aureus growth under conditions that impose a high demand for lipoic acid, likely via a role in the maturation of the lipoate synthase LipA. Is non-essential for growth in conditions that impose a low demand for lipoic acid or Fe-S clusters, such as fermentative growth. Also seems to be involved in the maturation of AcnA, LeuCD and IlvD proteins, that utilize Fe-S cluster cofactors, and its role increases under conditions of high-demand for Fe-S clusters (respiratory growth). Is not involved in the repair of Fe-S clusters damaged by reactive oxygen species or in the physical protection of Fe-S clusters from oxidants. Displays synergy with the Fe-S cluster carrier Nfu. This chain is Fe-S protein maturation auxiliary factor SufT, found in Staphylococcus aureus (strain USA300).